We begin with the raw amino-acid sequence, 124 residues long: Small ribosomal subunit protein uS12 (124 aa).

At Asp89 the chain carries 3-methylthioaspartic acid. An N6-acetyllysine modification is found at Lys108.

It belongs to the universal ribosomal protein uS12 family. Part of the 30S ribosomal subunit. Contacts proteins S8 and S17. May interact with IF1 in the 30S initiation complex.

Functionally, with S4 and S5 plays an important role in translational accuracy. Interacts with and stabilizes bases of the 16S rRNA that are involved in tRNA selection in the A site and with the mRNA backbone. Located at the interface of the 30S and 50S subunits, it traverses the body of the 30S subunit contacting proteins on the other side and probably holding the rRNA structure together. The combined cluster of proteins S8, S12 and S17 appears to hold together the shoulder and platform of the 30S subunit. The chain is Small ribosomal subunit protein uS12 from Escherichia coli O6:K15:H31 (strain 536 / UPEC).